A 310-amino-acid chain; its full sequence is Mycothiol acetyltransferase (310 aa).

2 consecutive N-acetyltransferase domains span residues Thr-5–Arg-155 and Pro-160–Ala-309. Residue Leu-80 to Val-82 coordinates acetyl-CoA. Positions 187, 226, and 238 each coordinate 1D-myo-inositol 2-(L-cysteinylamino)-2-deoxy-alpha-D-glucopyranoside. Ile-242 to Thr-244 serves as a coordination point for acetyl-CoA. 1D-myo-inositol 2-(L-cysteinylamino)-2-deoxy-alpha-D-glucopyranoside is bound at residue Tyr-276. Asn-281–Arg-286 serves as a coordination point for acetyl-CoA.

It belongs to the acetyltransferase family. MshD subfamily. In terms of assembly, monomer.

The enzyme catalyses 1D-myo-inositol 2-(L-cysteinylamino)-2-deoxy-alpha-D-glucopyranoside + acetyl-CoA = mycothiol + CoA + H(+). Catalyzes the transfer of acetyl from acetyl-CoA to desacetylmycothiol (Cys-GlcN-Ins) to form mycothiol. The polypeptide is Mycothiol acetyltransferase (Acidimicrobium ferrooxidans (strain DSM 10331 / JCM 15462 / NBRC 103882 / ICP)).